A 299-amino-acid chain; its full sequence is Sodium/potassium-transporting ATPase subunit beta-2 (299 aa).

At 1-36 the chain is on the cytoplasmic side; it reads MAALTQKKTCSQMMEEWKEFMWNPRTREFMGRTGSS. Residues 37–57 traverse the membrane as a helical; Signal-anchor for type II membrane protein segment; sequence WALILLFYVVFYAFLTAVFSL. Residues 58 to 299 lie on the Extracellular side of the membrane; it reads SLWVMLQTID…VIFTMKIDRL (242 aa). N-linked (GlcNAc...) asparagine glycosylation is found at Asn-101 and Asn-119. Intrachain disulfides connect Cys-130/Cys-152 and Cys-162/Cys-178. N-linked (GlcNAc...) asparagine glycans are attached at residues Asn-199, Asn-226, Asn-247, and Asn-259. The cysteines at positions 206 and 270 are disulfide-linked.

Belongs to the X(+)/potassium ATPases subunit beta family. The sodium/potassium-transporting ATPase is composed of a catalytic alpha subunit, an auxiliary non-catalytic beta subunit and an additional regulatory subunit. Expressed at a high level in bladder epithelial cells and eye and at a trace level in kidney; it is not detectable in significant amounts in the stomach, colon and small intestine.

It is found in the cell membrane. This is the non-catalytic component of the active enzyme, which catalyzes the hydrolysis of ATP coupled with the exchange of Na(+) and K(+) ions across the plasma membrane. The exact function of this glycoprotein is not known. Some specific sequence of the beta subunit can modulate the activation of the Na,K-pump by extracellular potassium ions. This chain is Sodium/potassium-transporting ATPase subunit beta-2, found in Rhinella marina (Cane toad).